Reading from the N-terminus, the 347-residue chain is 3-keto-steroid reductase ERG27 (347 aa).

NADP(+) contacts are provided by L15, T38, and R44. Residues S179 and Y202 each act as proton donor in the active site. NADP(+) contacts are provided by Y202, K206, and S237. The active-site Lowers pKa of active site Tyr is the K206. T345 is subject to Phosphothreonine.

This sequence belongs to the short-chain dehydrogenases/reductases (SDR) family. ERG27 subfamily. As to quaternary structure, heterotetramer of ERG25, ERG26, ERG27 and ERG28. ERG28 acts as a scaffold to tether ERG27 and other 4,4-demethylation-related enzymes, forming a demethylation enzyme complex, in the endoplasmic reticulum. Interacts with ERG25 and ERG28. Also interacts with ERG7, but only in lipid particles.

The protein localises to the endoplasmic reticulum membrane. It is found in the lipid droplet. The catalysed reaction is 3-dehydro-4alpha-methylzymosterol + NADPH + H(+) = 4alpha-methylzymosterol + NADP(+). It participates in steroid biosynthesis; zymosterol biosynthesis; zymosterol from lanosterol: step 5/6. In terms of biological role, 3-keto-steroid reductase; part of the third module of ergosterol biosynthesis pathway that includes the late steps of the pathway. ERG27 is a catalytic component of the C-4 demethylation complex that catalyze the reduction of the keto group on the C-3. The third module or late pathway involves the ergosterol synthesis itself through consecutive reactions that mainly occur in the endoplasmic reticulum (ER) membrane. Firstly, the squalene synthase ERG9 catalyzes the condensation of 2 farnesyl pyrophosphate moieties to form squalene, which is the precursor of all steroids. Squalene synthase is crucial for balancing the incorporation of farnesyl diphosphate (FPP) into sterol and nonsterol isoprene synthesis. Secondly, the squalene epoxidase ERG1 catalyzes the stereospecific oxidation of squalene to (S)-2,3-epoxysqualene, which is considered to be a rate-limiting enzyme in steroid biosynthesis. Then, the lanosterol synthase ERG7 catalyzes the cyclization of (S)-2,3 oxidosqualene to lanosterol, a reaction that forms the sterol core. In the next steps, lanosterol is transformed to zymosterol through a complex process involving various demethylation, reduction and desaturation reactions. The lanosterol 14-alpha-demethylase ERG11 (also known as CYP51) catalyzes C14-demethylation of lanosterol to produce 4,4'-dimethyl cholesta-8,14,24-triene-3-beta-ol, which is critical for ergosterol biosynthesis. The C-14 reductase ERG24 reduces the C14=C15 double bond of 4,4-dimethyl-cholesta-8,14,24-trienol to produce 4,4-dimethyl-cholesta-8,24-dienol. 4,4-dimethyl-cholesta-8,24-dienol is substrate of the C-4 demethylation complex ERG25-ERG26-ERG27 in which ERG25 catalyzes the three-step monooxygenation required for the demethylation of 4,4-dimethyl and 4alpha-methylsterols, ERG26 catalyzes the oxidative decarboxylation that results in a reduction of the 3-beta-hydroxy group at the C-3 carbon to an oxo group, and ERG27 is responsible for the reduction of the keto group on the C-3. ERG28 has a role as a scaffold to help anchor ERG25, ERG26 and ERG27 to the endoplasmic reticulum and ERG29 regulates the activity of the iron-containing C4-methylsterol oxidase ERG25. Then, the sterol 24-C-methyltransferase ERG6 catalyzes the methyl transfer from S-adenosyl-methionine to the C-24 of zymosterol to form fecosterol. The C-8 sterol isomerase ERG2 catalyzes the reaction which results in unsaturation at C-7 in the B ring of sterols and thus converts fecosterol to episterol. The sterol-C5-desaturase ERG3 then catalyzes the introduction of a C-5 double bond in the B ring to produce 5-dehydroepisterol. The C-22 sterol desaturase ERG5 further converts 5-dehydroepisterol into ergosta-5,7,22,24(28)-tetraen-3beta-ol by forming the C-22(23) double bond in the sterol side chain. Finally, ergosta-5,7,22,24(28)-tetraen-3beta-ol is substrate of the C-24(28) sterol reductase ERG4 to produce ergosterol. Its function is as follows. Facilitates the association of ERG7 with lipid particles preventing its digestion in the endoplasmic reticulum and the lipid particles. The polypeptide is 3-keto-steroid reductase ERG27 (Saccharomyces cerevisiae (strain ATCC 204508 / S288c) (Baker's yeast)).